A 123-amino-acid chain; its full sequence is Non-specific lipid-transfer protein (123 aa).

Positions 1-25 (MAVKKMVEAVFVVGLVVTMMNVWGA) are cleaved as a signal peptide. 4 disulfide bridges follow: Cys34–Cys82, Cys44–Cys59, Cys60–Cys104, and Cys80–Cys119.

Belongs to the plant LTP family.

In terms of biological role, plant non-specific lipid-transfer proteins transfer phospholipids as well as galactolipids across membranes. May play a role in wax or cutin deposition in the cell walls of expanding epidermal cells and certain secretory tissues. This Pinus taeda (Loblolly pine) protein is Non-specific lipid-transfer protein.